A 135-amino-acid chain; its full sequence is MACGLVASNLNLKPGECLRVRGEVAADAKSFLLNLGKDDNNLCLHFNPRFNAHGDVNTIVCNSKDAGAWGAEQRESAFPFQPGSVVEVCISFNQTDLTIKLPDGYEFKFPNRLNLEAINYLSAGGDFKIKCVAFE.

Residue Ala-2 is modified to N-acetylalanine. In terms of domain architecture, Galectin spans 4 to 135 (GLVASNLNLK…DFKIKCVAFE (132 aa)). An N6-acetyllysine mark is found at Lys-13 and Lys-29. Ser-30 is modified (phosphoserine). Residues 45–49 (HFNPR), His-53, Asn-62, and 69–72 (WGAE) each bind a beta-D-galactoside. An N6-acetyllysine; alternate modification is found at Lys-108. Lys-108 carries the N6-succinyllysine; alternate modification. An N6-acetyllysine modification is found at Lys-128.

Homodimer. Binds LGALS3BP. Interacts with CD2, CD3, CD4, CD6, CD7, CD43, ALCAM and CD45. Interacts with laminin (via poly-N-acetyllactosamine). Interacts with SUSD2. Interacts with cargo receptor TMED10; the interaction mediates the translocation from the cytoplasm into the ERGIC (endoplasmic reticulum-Golgi intermediate compartment) and thereby secretion.

The protein localises to the secreted. Its subcellular location is the extracellular space. The protein resides in the extracellular matrix. It is found in the cytoplasm. Functionally, lectin that binds beta-galactoside and a wide array of complex carbohydrates. Plays a role in regulating apoptosis, cell proliferation and cell differentiation. Inhibits CD45 protein phosphatase activity and therefore the dephosphorylation of Lyn kinase. Strong inducer of T-cell apoptosis. This chain is Galectin-1 (LGALS1), found in Bos taurus (Bovine).